Here is a 2009-residue protein sequence, read N- to C-terminus: Sodium channel protein type 1 subunit alpha (2009 aa).

Topologically, residues 1–128 (MEQTVLVPPG…KIAIKILVHS (128 aa)) are cytoplasmic. Over residues 28 to 48 (RIAEEKAKNPKPDKKDDDENG) the composition is skewed to basic and acidic residues. Positions 28 to 60 (RIAEEKAKNPKPDKKDDDENGPKPNSDLEAGKN) are disordered. Residues 110–454 (ILTPFNPLRK…QQMLEQLKKQ (345 aa)) form an I repeat. Residues 129–146 (LFSMLIMCTILTNCVFMT) traverse the membrane as a helical segment. At 147–152 (MSNPPD) the chain is on the extracellular side. A helical membrane pass occupies residues 153–177 (WTKNVEYTFTGIYTFESLIKIIARG). Topologically, residues 178-188 (FCLEDFTFLRD) are cytoplasmic. A helical membrane pass occupies residues 189-205 (PWNWLDFTVITFAYVTE). The Extracellular segment spans residues 206-213 (FVDLGNVS). N211 is a glycosylation site (N-linked (GlcNAc...) asparagine). A helical transmembrane segment spans residues 214–235 (ALRTFRVLRALKTISVIPGLKT). The Cytoplasmic portion of the chain corresponds to 236 to 245 (IVGALIQSVK). Residues 246–269 (KLSDVMILTVFCLSVFALIGLQLF) traverse the membrane as a helical segment. Topologically, residues 270–369 (MGNLRNKCVQ…YGYTSFDTFS (100 aa)) are extracellular. 2 cysteine pairs are disulfide-bonded: C277/C345 and C336/C351. 5 N-linked (GlcNAc...) asparagine glycosylation sites follow: N284, N295, N301, N306, and N338. Positions 370 to 384 (WAFLSLFRLMTQDFW) form an intramembrane region, pore-forming. Residues 385 to 397 (ENLYQLTLRAAGK) are Extracellular-facing. The helical transmembrane segment at 398-423 (TYMIFFVLVIFLGSFYLINLILAVVA) threads the bilayer. Over 424-768 (MAYEEQNQAT…HIVNLVVMDP (345 aa)) the chain is Cytoplasmic. A disordered region spans residues 458–528 (AQQAAAATAS…EFHKSESEDS (71 aa)). S470 is modified (phosphoserine). Residues 479–492 (LSDSSSEASKLSSK) show a composition bias toward low complexity. Basic residues predominate over residues 495–506 (KERRNRRKKRKQ). The segment covering 507-528 (KEQSGGEEKDDDEFHKSESEDS) has biased composition (basic and acidic residues). Residues S523, S525, S550, S551, S607, and S730 each carry the phosphoserine modification. A disordered region spans residues 584-628 (VGSENDFADDEHSTFEDNESRRDSLFVPRRHGERRNSNLSQTSRS). A compositionally biased stretch (basic and acidic residues) spans 593–607 (DEHSTFEDNESRRDS). The II repeat unit spans residues 750–1022 (CSPYWLKVKH…QIAVDRMHKG (273 aa)). The chain crosses the membrane as a helical span at residues 769–787 (FVDLAITICIVLNTLFMAM). Residues 788 to 797 (EHYPMTEHFN) lie on the Extracellular side of the membrane. Residues 798–820 (HVLTVGNLVFTGIFTAEMFLKII) form a helical membrane-spanning segment. Residues 821-830 (AMDPYYYFQE) lie on the Cytoplasmic side of the membrane. The helical transmembrane segment at 831-849 (GWNIFDGFIVTLSLVELGL) threads the bilayer. Residues 850–854 (ANVEG) are Extracellular-facing. Residues 855 to 874 (LSVLRSFRLLRVFKLAKSWP) form a helical membrane-spanning segment. Over 875 to 891 (TLNMLIKIIGNSVGALG) the chain is Cytoplasmic. The helical transmembrane segment at 892–912 (NLTLVLAIIVFIFAVVGMQLF) threads the bilayer. Topologically, residues 913–938 (GKSYKDCVCKIATDCKLPRWHMNDFF) are extracellular. A disulfide bond links C921 and C927. The segment at residues 939-952 (HSFLIVFRVLCGEW) is an intramembrane region (pore-forming). The Extracellular portion of the chain corresponds to 953–965 (IETMWDCMEVAGQ). Cysteines 959 and 968 form a disulfide. The helical transmembrane segment at 966–992 (AMCLTVFMMVMVIRNLVVLNLFLALLL) threads the bilayer. Over 993–1218 (SSFSADNLAA…RTCFRIVEHN (226 aa)) the chain is Cytoplasmic. A disordered region spans residues 1129–1163 (TEDFSSESDLEESKEKLNESSSSSEGSTVDIGAPA). The stretch at 1200 to 1514 (RGKQWWNLRR…KKYYNAMKKL (315 aa)) is one III repeat. A helical membrane pass occupies residues 1219–1237 (WFETFIVFMILLSSGALAF). Residues 1238-1250 (EDIYIDQRKTIKT) lie on the Extracellular side of the membrane. The chain crosses the membrane as a helical span at residues 1251–1276 (MLEYADKVFTYIFILEMLLKWVAYGY). Residues 1277-1278 (QT) lie on the Cytoplasmic side of the membrane. Residues 1279–1304 (YFTNAWCWLDFLIVDVSLVSLTANAL) traverse the membrane as a helical segment. At 1305–1313 (GYSELGAIK) the chain is on the extracellular side. Residues 1314–1332 (SLRTLRALRPLRALSRFEG) traverse the membrane as a helical segment. Over 1333–1345 (MRVVVNALLGAIP) the chain is Cytoplasmic. A helical transmembrane segment spans residues 1346–1369 (SIMNVLLVCLIFWLIFSIMGVNLF). The Extracellular portion of the chain corresponds to 1370 to 1415 (AGKFYHCVNTTTGDTFEITEVNNHSDCLKLIERNETARWKNVKVNF). A disulfide bridge links C1376 with C1396. Residues N1378, N1392, and N1403 are each glycosylated (N-linked (GlcNAc...) asparagine). Residues 1416–1433 (DNVGFGYLSLLQVATFKG) constitute an intramembrane region (pore-forming). The Extracellular segment spans residues 1434-1457 (WMDIMYAAVDSRNVELQPKYEESL). A helical transmembrane segment spans residues 1458-1483 (YMYLYFVIFIIFGSFFTLNLFIGVII). The Cytoplasmic segment spans residues 1484–1541 (DNFNQQKKKFGGQDIFMTEEQKKYYNAMKKLGSKKPQKPIPRPGNKFQGMVFDFVTRQ). Phosphoserine; by PKC is present on S1516. An IV repeat occupies 1523–1821 (IPRPGNKFQG…WEKFDPDATQ (299 aa)). A helical membrane pass occupies residues 1542–1560 (VFDISIMILICLNMVTMMV). Residues 1561 to 1571 (ETDDQSDYVTS) are Extracellular-facing. The tract at residues 1561–1571 (ETDDQSDYVTS) is S1-S2 loop of repeat IV. A helical membrane pass occupies residues 1572–1593 (ILSRINLVFIVLFTGECVLKLI). Residues 1594–1601 (SLRHYYFT) lie on the Cytoplasmic side of the membrane. Residues 1602-1623 (IGWNIFDFVVVILSIVGMFLAE) form a helical membrane-spanning segment. The tract at residues 1619–1636 (MFLAELIEKYFVSPTLFR) is S3b-S4 loop of repeat IV. Topologically, residues 1624–1636 (LIEKYFVSPTLFR) are extracellular. The chain crosses the membrane as a helical span at residues 1637 to 1655 (VIRLARIGRILRLIKGAKG). The Cytoplasmic portion of the chain corresponds to 1656–1665 (IRTLLFALMM). Residues 1666–1688 (SLPALFNIGLLLFLVMFIYAIFG) form a helical membrane-spanning segment. The Extracellular segment spans residues 1689–1711 (MSNFAYVKREVGIDDMFNFETFG). An intramembrane region (pore-forming) is located at residues 1712–1726 (NSMICLFQITTSAGW). The Extracellular portion of the chain corresponds to 1727-1759 (DGLLAPILNSKPPDCDPNKVNPGSSVKGDCGNP). A disulfide bond links C1741 and C1756. Residues 1760-1788 (SVGIFFFVSYIIISFLVVVNMYIAVILEN) traverse the membrane as a helical segment. The Cytoplasmic segment spans residues 1789–2009 (FSVATEESAE…EGKDEKAKGK (221 aa)). The IQ domain maps to 1915–1944 (EEVSAVIIQRAYRRHLLKRTVKQASFTYNK). Residues 1986 to 2009 (YDRVTKPIVEKHEQEGKDEKAKGK) form a disordered region. Over residues 1988-2009 (RVTKPIVEKHEQEGKDEKAKGK) the composition is skewed to basic and acidic residues.

The protein belongs to the sodium channel (TC 1.A.1.10) family. Nav1.1/SCN1A subfamily. The Nav1.1 voltage-gated sodium channel consists of an ion-conducting alpha subunit SCN1A which is functional on its own regulated by one or more beta-1 (SCN1B), beta-2 (SCN2B), beta-3 (SCN3B) and beta-4 (SCN4B) subunits. SCN1B and SCN3B are non-covalently associated with SCN1A. SCN2B and SCN4B are disulfide-linked to SCN1A. SCN1B regulates both the expression at the plasma membrane and the voltage dependence of Nav1.1 inactivation. SCN3B and SCN4B reduce Nav1.1 conductance. Probably interacts with TMEM233; modulates the gating properties of NaV1.1. Interacts with FGF13; regulates the steady-state inactivation of Nav.1.1. In terms of processing, phosphorylation at Ser-1516 by PKC in a highly conserved cytoplasmic loop slows inactivation of the sodium channel and reduces peak sodium currents.

It localises to the cell membrane. It catalyses the reaction Na(+)(in) = Na(+)(out). Its activity is regulated as follows. Activated by the spider toxins Hm1a and Hm1b (H.maculata, AC P60992 and AC P0DOC5) eliciting acute pain and mechanical allodynia. Inhibited by the conotoxin GVIIJ. Pore-forming subunit of Nav1.1, a voltage-gated sodium (Nav) channel that directly mediates the depolarizing phase of action potentials in excitable membranes. Navs, also called VGSCs (voltage-gated sodium channels) or VDSCs (voltage-dependent sodium channels), operate by switching between closed and open conformations depending on the voltage difference across the membrane. In the open conformation they allow Na(+) ions to selectively pass through the pore, along their electrochemical gradient. The influx of Na(+) ions provokes membrane depolarization, initiating the propagation of electrical signals throughout cells and tissues. By regulating the excitability of neurons, ensures that they respond appropriately to synaptic inputs, maintaining the balance between excitation and inhibition in brain neural circuits. Nav1.1 plays a role in controlling the excitability and action potential propagation from somatosensory neurons, thereby contributing to the sensory perception of mechanically-induced pain. The protein is Sodium channel protein type 1 subunit alpha of Rattus norvegicus (Rat).